The primary structure comprises 92 residues: Putative septation protein SpoVG (92 aa).

This sequence belongs to the SpoVG family.

Could be involved in septation. This is Putative septation protein SpoVG from Clostridioides difficile (strain 630) (Peptoclostridium difficile).